Here is a 321-residue protein sequence, read N- to C-terminus: Putrescine export system permease protein SapB (321 aa).

Residues 1–8 lie on the Cytoplasmic side of the membrane; sequence MIIFTLRR. The helical transmembrane segment at 9 to 29 threads the bilayer; sequence ILLLIVTLFLLTFVGFSLSYF. Residues 30 to 80 lie on the Periplasmic side of the membrane; that stretch reads TPHAPLQGASLWNAWVFWFNGLIHWDFGVSSINGQPIAEQLKEVFPATMEL. Residues 74–302 enclose the ABC transmembrane type-1 domain; the sequence is FPATMELCIL…SLVIIVNVIS (229 aa). A helical membrane pass occupies residues 81 to 101; that stretch reads CILAFGFALIVGIPVGMIAGI. The Cytoplasmic segment spans residues 102 to 112; sequence TRHKWQDNLIN. The helical transmembrane segment at 113 to 133 threads the bilayer; sequence AIALLGFSIPVFWLALLLTLF. The Periplasmic portion of the chain corresponds to 134–174; sequence CSLTLGWLPVSGRFDLLYEVKPITGFALIDAWLSDSPWRDE. Residues 175-195 traverse the membrane as a helical segment; it reads MIMSAIRHMILPVITLSVAPT. The Cytoplasmic segment spans residues 196-248; sequence TEVIRLMRISTIEVYDQNYVKAAATRGLSRFTILRRHVLHNALPPVIPRLGLQ. A helical membrane pass occupies residues 249–269; that stretch reads FSTMLTLAMITEMVFSWPGLG. Topologically, residues 270–280 are periplasmic; sequence RWLINAIRQQD. The helical transmembrane segment at 281-301 threads the bilayer; sequence YAAISAGVMVCGSLVIIVNVI. Residues 302 to 321 lie on the Cytoplasmic side of the membrane; the sequence is SDILGAMANPLKHKEWYALR.

The protein belongs to the binding-protein-dependent transport system permease family. OppBC subfamily.

It is found in the cell inner membrane. Part of a putrescine export transport system, does not play a role in resistance to antimicrobial peptides. The polypeptide is Putrescine export system permease protein SapB (sapB) (Escherichia coli (strain K12)).